The primary structure comprises 388 residues: Succinate--CoA ligase [ADP-forming] subunit beta (388 aa).

Residues 9–244 enclose the ATP-grasp domain; that stretch reads KELFARRGLP…VTQEDAREAH (236 aa). ATP-binding positions include K46, 53–55, E99, T102, and E107; that span reads GRG. Residues N199 and D213 each coordinate Mg(2+). Substrate is bound by residues N264 and 321 to 323; that span reads GIV.

Belongs to the succinate/malate CoA ligase beta subunit family. In terms of assembly, heterotetramer of two alpha and two beta subunits. The cofactor is Mg(2+).

It catalyses the reaction succinate + ATP + CoA = succinyl-CoA + ADP + phosphate. The enzyme catalyses GTP + succinate + CoA = succinyl-CoA + GDP + phosphate. It participates in carbohydrate metabolism; tricarboxylic acid cycle; succinate from succinyl-CoA (ligase route): step 1/1. Its function is as follows. Succinyl-CoA synthetase functions in the citric acid cycle (TCA), coupling the hydrolysis of succinyl-CoA to the synthesis of either ATP or GTP and thus represents the only step of substrate-level phosphorylation in the TCA. The beta subunit provides nucleotide specificity of the enzyme and binds the substrate succinate, while the binding sites for coenzyme A and phosphate are found in the alpha subunit. This Hamiltonella defensa subsp. Acyrthosiphon pisum (strain 5AT) protein is Succinate--CoA ligase [ADP-forming] subunit beta.